The sequence spans 253 residues: Imidazole glycerol phosphate synthase subunit HisF (253 aa).

Residues D11 and D130 contribute to the active site.

It belongs to the HisA/HisF family. In terms of assembly, heterodimer of HisH and HisF.

The protein localises to the cytoplasm. The catalysed reaction is 5-[(5-phospho-1-deoxy-D-ribulos-1-ylimino)methylamino]-1-(5-phospho-beta-D-ribosyl)imidazole-4-carboxamide + L-glutamine = D-erythro-1-(imidazol-4-yl)glycerol 3-phosphate + 5-amino-1-(5-phospho-beta-D-ribosyl)imidazole-4-carboxamide + L-glutamate + H(+). Its pathway is amino-acid biosynthesis; L-histidine biosynthesis; L-histidine from 5-phospho-alpha-D-ribose 1-diphosphate: step 5/9. In terms of biological role, IGPS catalyzes the conversion of PRFAR and glutamine to IGP, AICAR and glutamate. The HisF subunit catalyzes the cyclization activity that produces IGP and AICAR from PRFAR using the ammonia provided by the HisH subunit. This Dehalococcoides mccartyi (strain ATCC BAA-2266 / KCTC 15142 / 195) (Dehalococcoides ethenogenes (strain 195)) protein is Imidazole glycerol phosphate synthase subunit HisF.